Consider the following 326-residue polypeptide: MLFSGSAIPLSSFCSLPEKPHTLPMKLSPAAIRSSSSSAPGSLNFDLRTYWTTLITEINQKLDEAIPVKHPAGIYEAMRYSVLAQGAKRAPPVMCVAACELFGGDRLAAFPTACALEMVHAASLIHDDLPCMDDDPVRRGKPSNHTVYGSGMAILAGDALFPLAFQHIVSHTPPDLVPRATILRLITEIARTVGSTGMAAGQYVDLEGGPFPLSFVQEKKFGAMGECSAVCGGLLGGATEDELQSLRRYGRAVGMLYQVVDDITEDKKKSYDGGAEKGMMEMAEELKEKAKKELQVFDNKYGGGDTLVPLYTFVDYAAHRHFLLPL.

A chloroplast-targeting transit peptide spans 1–33; it reads MLFSGSAIPLSSFCSLPEKPHTLPMKLSPAAIR. Isopentenyl diphosphate contacts are provided by Lys88 and His120. Mg(2+)-binding residues include Asp127 and Asp133. Arg138 serves as a coordination point for dimethylallyl diphosphate. Arg139 contacts isopentenyl diphosphate. Dimethylallyl diphosphate-binding residues include Lys220 and Gln258. Residues 274–301 adopt a coiled-coil conformation; it reads GAEKGMMEMAEELKEKAKKELQVFDNKY.

It belongs to the FPP/GGPP synthase family. Part of a heterodimeric geranyl(geranyl)diphosphate synthase. Interacts with GGPPS1 or GGPPS2, but not with GGPPS9. Interacts with LIL3.1 and LIL3.2. Requires Mg(2+) as cofactor. In terms of tissue distribution, expressed ubiquitously.

It is found in the plastid. The protein resides in the chloroplast thylakoid membrane. Its function is as follows. Heterodimeric geranyl(geranyl)-diphosphate (GPP) synthase small subunit. The small subunit alone is inactive in vitro while the large subunit GGPPS1 catalyzes mainly the production of geranygeranyl-diphosphate in vitro. Upon association of the two subunits, the product profile changes and the production of gerany-diphosphate is strongly increased. This Arabidopsis thaliana (Mouse-ear cress) protein is Heterodimeric geranylgeranyl pyrophosphate synthase small subunit, chloroplastic (GGR).